The following is a 297-amino-acid chain: Nuclear transcription factor Y subunit B-11 (297 aa).

A disordered region spans residues 1-25; the sequence is MKSRKSYGHLLSPVGSPPLDNESGE. A DNA-binding region spans residues 63 to 69; the sequence is LPIANVS. The interval 90 to 101 is subunit association domain (SAD); the sequence is VQECVSEFISFV.

The protein belongs to the NFYB/HAP3 subunit family. As to quaternary structure, heterotrimeric transcription factor composed of three components, NF-YA, NF-YB and NF-YC. NF-YB and NF-YC must interact and dimerize for NF-YA association and DNA binding. Interacts with NFYC2, NFYC4 and NFYC6. Expressed in roots, culms, nodes, leaf blades, leaf sheaths and young panicles.

The protein localises to the nucleus. Its subcellular location is the cytoplasm. Probable transcription factor involved in the regulation of flowering time under long day (LD) conditions. Functions as a repressor of flowering, independently of HD1 and GHD7. Controls flowering time by negatively regulating the expression of EHD1 and HD3A. Regulates plant height by promoting cell elongation in the internodes. Component of the NF-Y/HAP transcription factor complex. This chain is Nuclear transcription factor Y subunit B-11 (HD5), found in Oryza sativa subsp. japonica (Rice).